We begin with the raw amino-acid sequence, 314 residues long: Serine hydrolase-like protein 2 (314 aa).

The 261-residue stretch at 33–293 folds into the AB hydrolase-1 domain; the sequence is PPVLCLHGWL…GNHCVHMSEP (261 aa). Residue Ser-108 is part of the active site.

The protein belongs to the AB hydrolase superfamily.

Its subcellular location is the cytoplasm. The protein resides in the perinuclear region. It is found in the peroxisome. Its function is as follows. Probable serine hydrolase. May be related to cell muscle hypertrophy. The polypeptide is Serine hydrolase-like protein 2 (SERHL2) (Homo sapiens (Human)).